The chain runs to 94 residues: DNA-directed RNA polymerase subunit omega (94 aa).

It belongs to the RNA polymerase subunit omega family. The RNAP catalytic core consists of 2 alpha, 1 beta, 1 beta' and 1 omega subunit. When a sigma factor is associated with the core the holoenzyme is formed, which can initiate transcription.

It catalyses the reaction RNA(n) + a ribonucleoside 5'-triphosphate = RNA(n+1) + diphosphate. Promotes RNA polymerase assembly. Latches the N- and C-terminal regions of the beta' subunit thereby facilitating its interaction with the beta and alpha subunits. This is DNA-directed RNA polymerase subunit omega from Bifidobacterium animalis subsp. lactis (strain AD011).